Reading from the N-terminus, the 334-residue chain is Cytochrome c551 peroxidase (334 aa).

Residues 1 to 26 form the signal peptide; it reads MIKRTLTVSLLSLSLGAMFASAGVMA. Heme c contacts are provided by Cys65, Cys68, His69, Cys209, Cys212, His213, His270, and Met284. A disordered region spans residues 315-334; it reads FKLPILPPSNNDTPRSQPYE. The span at 322–334 shows a compositional bias: polar residues; it reads PSNNDTPRSQPYE.

Post-translationally, binds 2 heme c groups covalently per subunit.

It localises to the periplasm. The enzyme catalyses 2 Fe(II)-[cytochrome c] + H2O2 + 2 H(+) = 2 Fe(III)-[cytochrome c] + 2 H2O. The polypeptide is Cytochrome c551 peroxidase (ccp) (Nitrosomonas europaea (strain ATCC 19718 / CIP 103999 / KCTC 2705 / NBRC 14298)).